The sequence spans 195 residues: Protein lin-28 homolog A (195 aa).

Residues glutamine 33 to proline 106 form the CSD domain. The interval leucine 98–arginine 126 is disordered. The flexible linker stretch occupies residues glycine 107–glycine 130. 2 consecutive CCHC-type zinc fingers follow at residues aspartate 131 to leucine 148 and lysine 153 to alanine 170. 8 residues coordinate Zn(2+): cysteine 133, cysteine 136, histidine 141, cysteine 146, cysteine 155, cysteine 158, histidine 163, and cysteine 168. Positions alanine 175–glutamate 195 are disordered. Over residues proline 182–glutamate 195 the composition is skewed to acidic residues.

Belongs to the lin-28 family. Monomer.

The protein resides in the cytoplasm. Its subcellular location is the rough endoplasmic reticulum. It is found in the P-body. It localises to the stress granule. The protein localises to the nucleus. The protein resides in the nucleolus. Functionally, RNA-binding protein that inhibits processing of pre-let-7 miRNAs and regulates translation of mRNAs that control developmental timing, pluripotency and metabolism. Seems to recognize a common structural G-quartet (G4) feature in its miRNA and mRNA targets. 'Translational enhancer' that drives specific mRNAs to polysomes and increases the efficiency of protein synthesis. Its association with the translational machinery and target mRNAs results in an increased number of initiation events per molecule of mRNA and, indirectly, in mRNA stabilization. Suppressor of microRNA (miRNA) biogenesis, including that of let-7. Binds specific target miRNA precursors (pre-miRNAs), recognizing an 5'-GGAG-3' motif found in their terminal loop, and recruits uridylyltransferase. This results in the terminal uridylation of target pre-miRNAs. Uridylated pre-miRNAs fail to be processed by Dicer and undergo degradation. Localized to the periendoplasmic reticulum area, binds to a large number of spliced mRNAs and inhibits the translation of mRNAs destined for the ER, reducing the synthesis of transmembrane proteins, ER or Golgi lumen proteins, and secretory proteins. Binds to and enhances the translation of mRNAs for several metabolic enzymes, increasing glycolysis and oxidative phosphorylation. Which, with the let-7 repression may enhance tissue repair in adult tissue. The polypeptide is Protein lin-28 homolog A (lin28a) (Xenopus tropicalis (Western clawed frog)).